A 258-amino-acid chain; its full sequence is Ureidoacrylate amidohydrolase RutB (258 aa).

The tract at residues 1–23 is disordered; the sequence is MDRPTTYPMDQPAGFRDAQGRHG. D47 functions as the Proton acceptor in the catalytic mechanism. K156 is an active-site residue. Catalysis depends on C189, which acts as the Nucleophile.

It belongs to the isochorismatase family. RutB subfamily.

The enzyme catalyses (Z)-3-ureidoacrylate + H2O + H(+) = (Z)-3-aminoacrylate + NH4(+) + CO2. The catalysed reaction is (Z)-3-ureidoacrylate + H2O = (Z)-3-aminoacrylate + carbamate + H(+). It catalyses the reaction (Z)-2-methylureidoacrylate + H2O + H(+) = (Z)-2-methylaminoacrylate + NH4(+) + CO2. Its function is as follows. Hydrolyzes ureidoacrylate to form aminoacrylate and carbamate. The carbamate hydrolyzes spontaneously, thereby releasing one of the nitrogen atoms of the pyrimidine ring as ammonia and one of its carbon atoms as CO2. This is Ureidoacrylate amidohydrolase RutB from Methylobacterium radiotolerans (strain ATCC 27329 / DSM 1819 / JCM 2831 / NBRC 15690 / NCIMB 10815 / 0-1).